Consider the following 216-residue polypeptide: GTP cyclohydrolase-2 (216 aa).

51–55 (RIHSE) provides a ligand contact to GTP. Zn(2+) is bound by residues Cys-56, Cys-67, and Cys-69. GTP is bound by residues Gln-72, 94–96 (EGR), and Thr-116. Asp-128 acts as the Proton acceptor in catalysis. Catalysis depends on Arg-130, which acts as the Nucleophile. GTP-binding residues include Thr-151 and Lys-156.

Belongs to the GTP cyclohydrolase II family. Zn(2+) serves as cofactor.

The catalysed reaction is GTP + 4 H2O = 2,5-diamino-6-hydroxy-4-(5-phosphoribosylamino)-pyrimidine + formate + 2 phosphate + 3 H(+). The protein operates within cofactor biosynthesis; riboflavin biosynthesis; 5-amino-6-(D-ribitylamino)uracil from GTP: step 1/4. In terms of biological role, catalyzes the conversion of GTP to 2,5-diamino-6-ribosylamino-4(3H)-pyrimidinone 5'-phosphate (DARP), formate and pyrophosphate. This is GTP cyclohydrolase-2 from Haemophilus influenzae (strain PittEE).